Reading from the N-terminus, the 193-residue chain is Peptidyl-tRNA hydrolase (193 aa).

TRNA is bound at residue Tyr16. His21 acts as the Proton acceptor in catalysis. 3 residues coordinate tRNA: Phe66, Asn68, and Asn114.

This sequence belongs to the PTH family. As to quaternary structure, monomer.

The protein resides in the cytoplasm. The catalysed reaction is an N-acyl-L-alpha-aminoacyl-tRNA + H2O = an N-acyl-L-amino acid + a tRNA + H(+). Its function is as follows. Hydrolyzes ribosome-free peptidyl-tRNAs (with 1 or more amino acids incorporated), which drop off the ribosome during protein synthesis, or as a result of ribosome stalling. Catalyzes the release of premature peptidyl moieties from peptidyl-tRNA molecules trapped in stalled 50S ribosomal subunits, and thus maintains levels of free tRNAs and 50S ribosomes. The polypeptide is Peptidyl-tRNA hydrolase (Pelobacter propionicus (strain DSM 2379 / NBRC 103807 / OttBd1)).